Consider the following 120-residue polypeptide: Glycine cleavage system H protein (120 aa).

The region spanning 17–99 (VATVGITTYA…QGAGWFFKLK (83 aa)) is the Lipoyl-binding domain. K58 is modified (N6-lipoyllysine).

This sequence belongs to the GcvH family. In terms of assembly, the glycine cleavage system is composed of four proteins: P, T, L and H. (R)-lipoate serves as cofactor.

The glycine cleavage system catalyzes the degradation of glycine. The H protein shuttles the methylamine group of glycine from the P protein to the T protein. The chain is Glycine cleavage system H protein from Rhizobium etli (strain CIAT 652).